The primary structure comprises 130 residues: Small ribosomal subunit protein uS9 (130 aa).

The protein belongs to the universal ribosomal protein uS9 family.

The polypeptide is Small ribosomal subunit protein uS9 (Neisseria gonorrhoeae (strain ATCC 700825 / FA 1090)).